The following is a 446-amino-acid chain: N-succinylarginine dihydrolase (446 aa).

Substrate-binding positions include 19-28, asparagine 110, and 137-138; these read AGLSFGNVAS and HR. Glutamate 174 is a catalytic residue. Position 213 (arginine 213) interacts with substrate. Residue histidine 249 is part of the active site. Substrate-binding residues include aspartate 251 and asparagine 364. The active-site Nucleophile is the cysteine 370.

It belongs to the succinylarginine dihydrolase family. As to quaternary structure, homodimer.

The catalysed reaction is N(2)-succinyl-L-arginine + 2 H2O + 2 H(+) = N(2)-succinyl-L-ornithine + 2 NH4(+) + CO2. It functions in the pathway amino-acid degradation; L-arginine degradation via AST pathway; L-glutamate and succinate from L-arginine: step 2/5. Functionally, catalyzes the hydrolysis of N(2)-succinylarginine into N(2)-succinylornithine, ammonia and CO(2). This Paraburkholderia xenovorans (strain LB400) protein is N-succinylarginine dihydrolase.